Reading from the N-terminus, the 167-residue chain is Ubiquitin-conjugating enzyme E2 2 (167 aa).

Residues 4–150 (PARRRLMRDF…VKETVEKSWE (147 aa)) form the UBC core domain. The active-site Glycyl thioester intermediate is C88. The segment at 148–167 (SWEDNMDDMDDSDEDDEDDE) is disordered. Positions 151 to 167 (DNMDDMDDSDEDDEDDE) are enriched in acidic residues.

The protein belongs to the ubiquitin-conjugating enzyme family.

It localises to the cytoplasm. It is found in the nucleus. The enzyme catalyses S-ubiquitinyl-[E1 ubiquitin-activating enzyme]-L-cysteine + [E2 ubiquitin-conjugating enzyme]-L-cysteine = [E1 ubiquitin-activating enzyme]-L-cysteine + S-ubiquitinyl-[E2 ubiquitin-conjugating enzyme]-L-cysteine.. It functions in the pathway protein modification; protein ubiquitination. Its function is as follows. Catalyzes the covalent attachment of ubiquitin to other proteins. Plays a role in transcription regulation by catalyzing the monoubiquitination of histone H2B to form H2BK123ub1. H2BK123ub1 gives a specific tag for epigenetic transcriptional activation and is also a prerequisite for H3K4me and H3K79me formation. Also involved in postreplication repair of UV-damaged DNA, in N-end rule-dependent protein degradation and in sporulation. The protein is Ubiquitin-conjugating enzyme E2 2 (UBC2) of Candida glabrata (strain ATCC 2001 / BCRC 20586 / JCM 3761 / NBRC 0622 / NRRL Y-65 / CBS 138) (Yeast).